A 523-amino-acid chain; its full sequence is Probable DNA ligase (523 aa).

ATP is bound at residue Glu210. Lys212 serves as the catalytic N6-AMP-lysine intermediate. ATP contacts are provided by Arg217, Arg232, Glu261, Phe317, Arg388, and Lys394.

The protein belongs to the ATP-dependent DNA ligase family. The cofactor is Mg(2+).

It carries out the reaction ATP + (deoxyribonucleotide)n-3'-hydroxyl + 5'-phospho-(deoxyribonucleotide)m = (deoxyribonucleotide)n+m + AMP + diphosphate.. Its function is as follows. DNA ligase that seals nicks in double-stranded DNA during DNA replication, DNA recombination and DNA repair. The sequence is that of Probable DNA ligase from Nocardia farcinica (strain IFM 10152).